Consider the following 169-residue polypeptide: MYTSKQPFLKSKQPFRKSKQTFNKSKQTFRKSKQTFRKFKQPFRKSKQPFRRRPRIGPGDRIDYRNMSLINRFISEQGKILSRRINRLTLKQQRLITLAIKQARILSFLPFRNYENEKQFQAQSISIITGSRPRKNRHIPQLTEKYNSNRNLRNYNQNLRNINRNLSSD.

The segment at 1 to 61 is disordered; the sequence is MYTSKQPFLK…RRPRIGPGDR (61 aa). Positions 27–55 are enriched in basic residues; that stretch reads QTFRKSKQTFRKFKQPFRKSKQPFRRRPR.

This sequence belongs to the bacterial ribosomal protein bS18 family. Part of the 30S ribosomal subunit.

The protein localises to the plastid. It localises to the chloroplast. The polypeptide is Small ribosomal subunit protein bS18c (Agrostis stolonifera (Creeping bentgrass)).